Here is a 489-residue protein sequence, read N- to C-terminus: Cytochrome P450-DIT2 (489 aa).

Residue Cys435 coordinates heme.

The protein belongs to the cytochrome P450 family. It depends on heme as a cofactor.

Its function is as follows. Involved in spore wall maturation. Thought to catalyze the oxidation of tyrosine residues in the formation of LL-dityrosine a precursor of the spore wall. In Saccharomyces cerevisiae (strain ATCC 204508 / S288c) (Baker's yeast), this protein is Cytochrome P450-DIT2 (DIT2).